A 226-amino-acid chain; its full sequence is Leucyl/phenylalanyl-tRNA--protein transferase (226 aa).

The protein belongs to the L/F-transferase family.

The protein resides in the cytoplasm. The enzyme catalyses N-terminal L-lysyl-[protein] + L-leucyl-tRNA(Leu) = N-terminal L-leucyl-L-lysyl-[protein] + tRNA(Leu) + H(+). It catalyses the reaction N-terminal L-arginyl-[protein] + L-leucyl-tRNA(Leu) = N-terminal L-leucyl-L-arginyl-[protein] + tRNA(Leu) + H(+). The catalysed reaction is L-phenylalanyl-tRNA(Phe) + an N-terminal L-alpha-aminoacyl-[protein] = an N-terminal L-phenylalanyl-L-alpha-aminoacyl-[protein] + tRNA(Phe). Functionally, functions in the N-end rule pathway of protein degradation where it conjugates Leu, Phe and, less efficiently, Met from aminoacyl-tRNAs to the N-termini of proteins containing an N-terminal arginine or lysine. The protein is Leucyl/phenylalanyl-tRNA--protein transferase of Pseudomonas aeruginosa (strain UCBPP-PA14).